Consider the following 71-residue polypeptide: Beta-defensin 9 (71 aa).

The first 23 residues, 1–23 (MRTLCSLLLICCLLFSYDTPVVG), serve as a signal peptide directing secretion. 3 cysteine pairs are disulfide-bonded: Cys-37–Cys-66, Cys-44–Cys-59, and Cys-49–Cys-67.

It belongs to the beta-defensin family.

The protein localises to the secreted. Its function is as follows. Has antibacterial activity. In Rattus norvegicus (Rat), this protein is Beta-defensin 9 (Defb9).